The following is a 339-amino-acid chain: Anthranilate phosphoribosyltransferase (339 aa).

Residues Gly-82, 85–86, Thr-90, 92–95, 110–118, and Ser-122 each bind 5-phospho-alpha-D-ribose 1-diphosphate; these read GD, NIST, and KHGNRSASG. Gly-82 serves as a coordination point for anthranilate. Ser-94 serves as a coordination point for Mg(2+). Asn-113 is an anthranilate binding site. Arg-168 is a binding site for anthranilate. Residues Asp-226 and Glu-227 each coordinate Mg(2+).

Belongs to the anthranilate phosphoribosyltransferase family. As to quaternary structure, homodimer. It depends on Mg(2+) as a cofactor.

It carries out the reaction N-(5-phospho-beta-D-ribosyl)anthranilate + diphosphate = 5-phospho-alpha-D-ribose 1-diphosphate + anthranilate. Its pathway is amino-acid biosynthesis; L-tryptophan biosynthesis; L-tryptophan from chorismate: step 2/5. Functionally, catalyzes the transfer of the phosphoribosyl group of 5-phosphorylribose-1-pyrophosphate (PRPP) to anthranilate to yield N-(5'-phosphoribosyl)-anthranilate (PRA). This is Anthranilate phosphoribosyltransferase from Methanosphaerula palustris (strain ATCC BAA-1556 / DSM 19958 / E1-9c).